A 129-amino-acid polypeptide reads, in one-letter code: Lysozyme C-3 (129 aa).

Residues 1-129 (KVYERCELAA…VSRWIRGCRL (129 aa)) enclose the C-type lysozyme domain. Disulfide bonds link cysteine 6–cysteine 127, cysteine 30–cysteine 115, cysteine 64–cysteine 80, and cysteine 76–cysteine 94. Catalysis depends on residues glutamate 35 and aspartate 52.

Belongs to the glycosyl hydrolase 22 family.

The protein resides in the secreted. The catalysed reaction is Hydrolysis of (1-&gt;4)-beta-linkages between N-acetylmuramic acid and N-acetyl-D-glucosamine residues in a peptidoglycan and between N-acetyl-D-glucosamine residues in chitodextrins.. Lysozymes have primarily a bacteriolytic function; those in tissues and body fluids are associated with the monocyte-macrophage system and enhance the activity of immunoagents. This is Lysozyme C-3 from Anas platyrhynchos (Mallard).